A 407-amino-acid chain; its full sequence is Subtilisin-like protease CPC735_013710 (407 aa).

A signal peptide spans 1–17 (MQLLNLSLFFLLPFATA). The propeptide occupies 18 to 115 (NPIPQDSQNI…VLPDQKIYLA (98 aa)). An Inhibitor I9 domain is found at 31-114 (QYIVTLKDGL…SVLPDQKIYL (84 aa)). The Peptidase S8 domain occupies 124 to 407 (GWNLGYMSSK…VAYNGIQEML (284 aa)). Asn145 is a glycosylation site (N-linked (GlcNAc...) asparagine). Catalysis depends on charge relay system residues Asp162 and His194. 3 N-linked (GlcNAc...) asparagine glycosylation sites follow: Asn241, Asn254, and Asn341. Residue Ser350 is the Charge relay system of the active site. A glycan (N-linked (GlcNAc...) asparagine) is linked at Asn381.

This sequence belongs to the peptidase S8 family.

It is found in the secreted. Functionally, secreted subtilisin-like serine protease with keratinolytic activity that contributes to pathogenicity. The protein is Subtilisin-like protease CPC735_013710 of Coccidioides posadasii (strain C735) (Valley fever fungus).